Reading from the N-terminus, the 412-residue chain is MSQGTLYINRSPRNYASEALISYFKLDVKIVDLEQSSEFASLFPLKQAPAFLGPKGLKLTEALAIQFYLANQVADEKERARLLGSDVIEKSQILRWASLANSDVMSNIARPFLSFKGLIPYNKKDVDACFVKIDNLAAVFDARLRDYTFVATENISLGDLHAAGSWAFGLATILGPEWRAKHPHLMRWFNTVAASPIVKTPFAEVKLAEKALTYTPPKKQKAEKPKAEKSKAEKKKDEAKPADDAAPAKKPKHPLEALGKSTFVLDDWKRKYSNDDTRPVALPWFWEHYNPEEYSIWKVGYKYNDELTLTFMSNNLVGGFFNRLSASTKYMFGCLVVYGENNNNGIVGAVMVRGQDFAPAFDVAPDWESYEYTKLDPTKEEDKEFVNNMWAWDKPVVVNGEDKEIVDGKVLK.

N-acetylserine is present on Ser-2. The GST N-terminal domain occupies 2–77 (SQGTLYINRS…YLANQVADEK (76 aa)). The GST C-terminal domain occupies 86-217 (DVIEKSQILR…AEKALTYTPP (132 aa)). Residues 216–253 (PPKKQKAEKPKAEKSKAEKKKDEAKPADDAAPAKKPKH) form a disordered region. Basic and acidic residues predominate over residues 220–247 (QKAEKPKAEKSKAEKKKDEAKPADDAAP). Residues 251 to 412 (PKHPLEALGK…KEIVDGKVLK (162 aa)) form the EF-1-gamma C-terminal domain.

The eukaryotic elongation factor 1 complex (eEF1) is probably a heterohexamer. Two trimeric complexes, each composed of eEF1A (TEF1 or TEF2), eEF1Balpha (EFB1) and eEF1Bgamma (CAM1 or TEF4), are probably dimerized via the eF1Bgamma subunits. The eEF1B subcomplex with the GEF activity is formed of eEF1Balpha and eEF1Bgamma. TEF4 interacts with EFB1.

Its subcellular location is the cytoplasm. It participates in protein biosynthesis; polypeptide chain elongation. Subunit of the eukaryotic elongation factor 1 complex (eEF1). Probably plays a role in anchoring the complex to other cellular components. In Saccharomyces cerevisiae (strain ATCC 204508 / S288c) (Baker's yeast), this protein is Elongation factor 1-gamma 2 (TEF4).